The chain runs to 441 residues: Protein eva-1 homolog C (441 aa).

The interval 1–23 is disordered; it reads MLLPGPARQPPTPQPVQHPGLRR. The first 48 residues, 1–48, serve as a signal peptide directing secretion; the sequence is MLLPGPARQPPTPQPVQHPGLRRQVEPPGQLLRLFYCTVLVCSKEISA. Over residues 7 to 16 the composition is skewed to pro residues; it reads ARQPPTPQPV. The Extracellular segment spans residues 49-322; sequence LTDFSGYLTK…AYIRAHPERA (274 aa). N62 carries N-linked (GlcNAc...) asparagine glycosylation. One can recognise an SUEL-type lectin 1 domain in the interval 67–159; sequence ACDGDYLNLQ…KYLLVSFKCQ (93 aa). An N-linked (GlcNAc...) asparagine glycan is attached at N165. In terms of domain architecture, SUEL-type lectin 2 spans 168-260; sequence VCEDQELKLH…KYLTVTYACV (93 aa). The chain crosses the membrane as a helical span at residues 323 to 343; it reads ALLFVSSVCIGLALTLCALVI. Residues 344–441 are Cytoplasmic-facing; the sequence is RESCAKDFRD…SLPRNMGQFY (98 aa). The disordered stretch occupies residues 362 to 391; that stretch reads VPGSDKVEEDSEDEEEEEDSSESDFPGELS. The segment covering 368–383 has biased composition (acidic residues); the sequence is VEEDSEDEEEEEDSSE.

The protein belongs to the EVA1 family.

It is found in the cell membrane. Binds heparin. The sequence is that of Protein eva-1 homolog C (EVA1C) from Pan troglodytes (Chimpanzee).